The sequence spans 641 residues: MLEQIRGPADLQHLSTHQLRELAAEIREFLIHKVAATGGHLGPNLGVVELTLALHRVFDSPHDPIIFDTGHQAYVHKMLTGRAHEFESLRKKGGLSGYPSRSESEHDWVESSHASAALSYADGLAKAFELSGHRNRHVVAVVGDGALTGGMCWEALNNIAASGRPVIIVVNDNGRSYAPTIGGVADHLATLRLQPAYEQALQRGRDALRALPLVGKFAYRVMHSVKAGIKDSLSPQLLFTDLGLKYVGPVDGHDERAVEAALRHARGFGRPVIVHVVTRKGMGYAPAEDDEADQMHSCGVIDPITGQATKVAGPGWTATFSDALIGYARKRRDIVAITAAMPGPTGLTPFGQQFPDRLFDVGIAEQHAMTSAAGLAMGGMHPVVAIYSTFLNRAFDQIMMDVALHRLPVTMVLDRAGITGSDGASHNGMWDLSILGVVPGMRVAAPRDAARLREELGEALDVDDGPTALRFPKGDVGEDIPAIERRGSGLSGVDVLALPASGCNHDVLLIGVGAFAPMALAVARRLADQGIGVTVVDPRWVLPVSDSILELAARHKLVVTCEDNGVNGGVGSAVSAALRRAELDVPCRDVGLPQRFYEHASRGELLADLALTDQDIARRITGWVAALGSGVAEAEIREHLD.

Thiamine diphosphate contacts are provided by residues histidine 71 and 112–114; that span reads SHA. Aspartate 144 provides a ligand contact to Mg(2+). Residues 145-146, asparagine 173, tyrosine 284, and glutamate 365 contribute to the thiamine diphosphate site; that span reads GA. Residue asparagine 173 participates in Mg(2+) binding.

This sequence belongs to the transketolase family. DXPS subfamily. As to quaternary structure, homodimer. Requires Mg(2+) as cofactor. Thiamine diphosphate is required as a cofactor.

It carries out the reaction D-glyceraldehyde 3-phosphate + pyruvate + H(+) = 1-deoxy-D-xylulose 5-phosphate + CO2. The protein operates within metabolic intermediate biosynthesis; 1-deoxy-D-xylulose 5-phosphate biosynthesis; 1-deoxy-D-xylulose 5-phosphate from D-glyceraldehyde 3-phosphate and pyruvate: step 1/1. Functionally, catalyzes the acyloin condensation reaction between C atoms 2 and 3 of pyruvate and glyceraldehyde 3-phosphate to yield 1-deoxy-D-xylulose-5-phosphate (DXP). This chain is 1-deoxy-D-xylulose-5-phosphate synthase, found in Mycobacterium avium (strain 104).